The sequence spans 250 residues: 5-oxoprolinase subunit A (250 aa).

The protein belongs to the LamB/PxpA family. Forms a complex composed of PxpA, PxpB and PxpC.

It catalyses the reaction 5-oxo-L-proline + ATP + 2 H2O = L-glutamate + ADP + phosphate + H(+). In terms of biological role, catalyzes the cleavage of 5-oxoproline to form L-glutamate coupled to the hydrolysis of ATP to ADP and inorganic phosphate. The chain is 5-oxoprolinase subunit A from Staphylococcus aureus (strain NCTC 8325 / PS 47).